A 152-amino-acid chain; its full sequence is Ribosome maturation factor RimP (152 aa).

The protein belongs to the RimP family.

The protein resides in the cytoplasm. Functionally, required for maturation of 30S ribosomal subunits. This chain is Ribosome maturation factor RimP, found in Aeromonas hydrophila subsp. hydrophila (strain ATCC 7966 / DSM 30187 / BCRC 13018 / CCUG 14551 / JCM 1027 / KCTC 2358 / NCIMB 9240 / NCTC 8049).